A 188-amino-acid chain; its full sequence is ATP synthase subunit b 2 (188 aa).

A disordered region spans residues 1-23 (MAEGHGDANGATAHTAADGGHKA). The segment covering 8 to 18 (ANGATAHTAAD) has biased composition (low complexity). The helical transmembrane segment at 37–57 (LVSLLIAFVALYLIVSKIALP) threads the bilayer.

This sequence belongs to the ATPase B chain family. In terms of assembly, F-type ATPases have 2 components, F(1) - the catalytic core - and F(0) - the membrane proton channel. F(1) has five subunits: alpha(3), beta(3), gamma(1), delta(1), epsilon(1). F(0) has three main subunits: a(1), b(2) and c(10-14). The alpha and beta chains form an alternating ring which encloses part of the gamma chain. F(1) is attached to F(0) by a central stalk formed by the gamma and epsilon chains, while a peripheral stalk is formed by the delta and b chains.

Its subcellular location is the cell inner membrane. In terms of biological role, f(1)F(0) ATP synthase produces ATP from ADP in the presence of a proton or sodium gradient. F-type ATPases consist of two structural domains, F(1) containing the extramembraneous catalytic core and F(0) containing the membrane proton channel, linked together by a central stalk and a peripheral stalk. During catalysis, ATP synthesis in the catalytic domain of F(1) is coupled via a rotary mechanism of the central stalk subunits to proton translocation. Its function is as follows. Component of the F(0) channel, it forms part of the peripheral stalk, linking F(1) to F(0). The b'-subunit is a diverged and duplicated form of b found in plants and photosynthetic bacteria. This is ATP synthase subunit b 2 (atpF2) from Rhodopseudomonas palustris (strain BisB18).